The primary structure comprises 237 residues: Phosphoribosylaminoimidazole-succinocarboxamide synthase (237 aa).

The protein belongs to the SAICAR synthetase family.

It carries out the reaction 5-amino-1-(5-phospho-D-ribosyl)imidazole-4-carboxylate + L-aspartate + ATP = (2S)-2-[5-amino-1-(5-phospho-beta-D-ribosyl)imidazole-4-carboxamido]succinate + ADP + phosphate + 2 H(+). The protein operates within purine metabolism; IMP biosynthesis via de novo pathway; 5-amino-1-(5-phospho-D-ribosyl)imidazole-4-carboxamide from 5-amino-1-(5-phospho-D-ribosyl)imidazole-4-carboxylate: step 1/2. This chain is Phosphoribosylaminoimidazole-succinocarboxamide synthase, found in Serratia proteamaculans (strain 568).